Consider the following 48-residue polypeptide: uncharacterized protein (48 aa).

This is an uncharacterized protein from Haemophilus influenzae (strain ATCC 51907 / DSM 11121 / KW20 / Rd).